Here is a 142-residue protein sequence, read N- to C-terminus: Peptide methionine sulfoxide reductase MsrB (142 aa).

One can recognise a MsrB domain in the interval 3–126 (KEELKKKLSP…NSAALRFIPF (124 aa)). The active-site Nucleophile is Cys-115.

It belongs to the MsrB Met sulfoxide reductase family.

The catalysed reaction is L-methionyl-[protein] + [thioredoxin]-disulfide + H2O = L-methionyl-(R)-S-oxide-[protein] + [thioredoxin]-dithiol. This is Peptide methionine sulfoxide reductase MsrB from Lactococcus lactis subsp. cremoris (strain MG1363).